The chain runs to 393 residues: Elongation factor Tu (393 aa).

The 194-residue stretch at 10 to 203 (KPHVNIGTIG…AVDNYIPTPV (194 aa)) folds into the tr-type G domain. The G1 stretch occupies residues 19 to 26 (GHVDHGKT). A GTP-binding site is contributed by 19 to 26 (GHVDHGKT). Thr-26 contributes to the Mg(2+) binding site. Positions 60-64 (GITIS) are G2. The segment at 81-84 (DCPG) is G3. Residues 81 to 85 (DCPGH) and 136 to 139 (NKVD) contribute to the GTP site. Residues 136–139 (NKVD) form a G4 region. Residues 173-175 (SAL) form a G5 region.

This sequence belongs to the TRAFAC class translation factor GTPase superfamily. Classic translation factor GTPase family. EF-Tu/EF-1A subfamily. In terms of assembly, monomer.

It localises to the cytoplasm. The enzyme catalyses GTP + H2O = GDP + phosphate + H(+). GTP hydrolase that promotes the GTP-dependent binding of aminoacyl-tRNA to the A-site of ribosomes during protein biosynthesis. The sequence is that of Elongation factor Tu from Chloroherpeton thalassium (strain ATCC 35110 / GB-78).